The following is a 99-amino-acid chain: Aspartyl/glutamyl-tRNA(Asn/Gln) amidotransferase subunit C (99 aa).

Belongs to the GatC family. As to quaternary structure, heterotrimer of A, B and C subunits.

The enzyme catalyses L-glutamyl-tRNA(Gln) + L-glutamine + ATP + H2O = L-glutaminyl-tRNA(Gln) + L-glutamate + ADP + phosphate + H(+). It catalyses the reaction L-aspartyl-tRNA(Asn) + L-glutamine + ATP + H2O = L-asparaginyl-tRNA(Asn) + L-glutamate + ADP + phosphate + 2 H(+). In terms of biological role, allows the formation of correctly charged Asn-tRNA(Asn) or Gln-tRNA(Gln) through the transamidation of misacylated Asp-tRNA(Asn) or Glu-tRNA(Gln) in organisms which lack either or both of asparaginyl-tRNA or glutaminyl-tRNA synthetases. The reaction takes place in the presence of glutamine and ATP through an activated phospho-Asp-tRNA(Asn) or phospho-Glu-tRNA(Gln). The protein is Aspartyl/glutamyl-tRNA(Asn/Gln) amidotransferase subunit C of Cupriavidus necator (strain ATCC 17699 / DSM 428 / KCTC 22496 / NCIMB 10442 / H16 / Stanier 337) (Ralstonia eutropha).